Reading from the N-terminus, the 463-residue chain is Bifunctional protein HldE (463 aa).

A ribokinase region spans residues 1 to 315; sequence MRKILVIGDL…LILNQTHPKI (315 aa). 191–194 serves as a coordination point for ATP; it reads NRFE. Asp260 is a catalytic residue. A cytidylyltransferase region spans residues 334–463; sequence FTNGCFDILH…IEKIKRAYND (130 aa).

In the N-terminal section; belongs to the carbohydrate kinase PfkB family. The protein in the C-terminal section; belongs to the cytidylyltransferase family. In terms of assembly, homodimer.

It catalyses the reaction D-glycero-beta-D-manno-heptose 7-phosphate + ATP = D-glycero-beta-D-manno-heptose 1,7-bisphosphate + ADP + H(+). The enzyme catalyses D-glycero-beta-D-manno-heptose 1-phosphate + ATP + H(+) = ADP-D-glycero-beta-D-manno-heptose + diphosphate. The protein operates within nucleotide-sugar biosynthesis; ADP-L-glycero-beta-D-manno-heptose biosynthesis; ADP-L-glycero-beta-D-manno-heptose from D-glycero-beta-D-manno-heptose 7-phosphate: step 1/4. It functions in the pathway nucleotide-sugar biosynthesis; ADP-L-glycero-beta-D-manno-heptose biosynthesis; ADP-L-glycero-beta-D-manno-heptose from D-glycero-beta-D-manno-heptose 7-phosphate: step 3/4. Its function is as follows. Catalyzes the phosphorylation of D-glycero-D-manno-heptose 7-phosphate at the C-1 position to selectively form D-glycero-beta-D-manno-heptose-1,7-bisphosphate. In terms of biological role, catalyzes the ADP transfer from ATP to D-glycero-beta-D-manno-heptose 1-phosphate, yielding ADP-D-glycero-beta-D-manno-heptose. In Helicobacter acinonychis (strain Sheeba), this protein is Bifunctional protein HldE.